A 192-amino-acid chain; its full sequence is Glycerol-3-phosphate acyltransferase (192 aa).

5 consecutive transmembrane segments (helical) span residues 4–24 (MFWLLTTFAYLLGSLSFAILL), 54–74 (LAILTLLGDLCKGLVPILIAS), 80–100 (IAQQGWIGVCAVLGHLFPVYF), 112–132 (AGVLLGLYPPAAALAIVAWLL), and 154–174 (LLAWQEPHALLPMSVLTLLIV).

Belongs to the PlsY family. As to quaternary structure, probably interacts with PlsX.

Its subcellular location is the cell inner membrane. It catalyses the reaction an acyl phosphate + sn-glycerol 3-phosphate = a 1-acyl-sn-glycero-3-phosphate + phosphate. It functions in the pathway lipid metabolism; phospholipid metabolism. Catalyzes the transfer of an acyl group from acyl-phosphate (acyl-PO(4)) to glycerol-3-phosphate (G3P) to form lysophosphatidic acid (LPA). This enzyme utilizes acyl-phosphate as fatty acyl donor, but not acyl-CoA or acyl-ACP. This Pseudomonas syringae pv. syringae (strain B728a) protein is Glycerol-3-phosphate acyltransferase.